Here is a 327-residue protein sequence, read N- to C-terminus: MSVASPAAAGLDTLCLAGPTASGKTAAALALAQVLPVEVVSVDSALVYRGMDIGTAKPSAAERALVPHHLIDLIEPCAAYSAAQFVADARRAMAEIRARGRLPLLVGGTMLYFKALFDGIDALPPADPALRAALDAEARTRGWPALHAELATVDPVTAARLAPNDAQRVQRALEVWRATGQPLSSFHSGRFDVASAAPPRTALISLEPTDRGWLHARIGERFAAMLQAGLVDEVRRLRARGDLHADLPAMRCVGYRQAWAALDAGDPPDLARLQAEGAAATRQLAKRQLTWLRGMPWRRTVACDAPDASAQVVALARQLVDEREAAA.

18 to 25 is an ATP binding site; sequence GPTASGKT. Substrate is bound at residue 20–25; sequence TASGKT. Interaction with substrate tRNA regions lie at residues 43 to 46, 167 to 171, and 251 to 256; these read DSAL, QRVQR, and RCVGYR.

It belongs to the IPP transferase family. As to quaternary structure, monomer. Requires Mg(2+) as cofactor.

The catalysed reaction is adenosine(37) in tRNA + dimethylallyl diphosphate = N(6)-dimethylallyladenosine(37) in tRNA + diphosphate. Functionally, catalyzes the transfer of a dimethylallyl group onto the adenine at position 37 in tRNAs that read codons beginning with uridine, leading to the formation of N6-(dimethylallyl)adenosine (i(6)A). The protein is tRNA dimethylallyltransferase of Methylibium petroleiphilum (strain ATCC BAA-1232 / LMG 22953 / PM1).